The chain runs to 196 residues: Putative 3-methyladenine DNA glycosylase (196 aa).

This sequence belongs to the DNA glycosylase MPG family.

The chain is Putative 3-methyladenine DNA glycosylase from Chlorobium luteolum (strain DSM 273 / BCRC 81028 / 2530) (Pelodictyon luteolum).